Consider the following 223-residue polypeptide: Cytotoxic T-lymphocyte protein 4 (223 aa).

Positions 1 to 35 are cleaved as a signal peptide; that stretch reads MAGFGFRRHGVQPDLASRTWPCTALFSLLFIPVFS. Residues 36–161 are Extracellular-facing; that stretch reads KGMHAAQPAV…IDPEPCPDSD (126 aa). The Ig-like V-type domain maps to 39–140; it reads HAAQPAVVLA…VELMYPPPYY (102 aa). Positions 46-50 are homodimerization; the sequence is VLASS. Intrachain disulfides connect Cys58–Cys129 and Cys85–Cys103. Asn113 is a glycosylation site (N-linked (GlcNAc...) asparagine). Positions 134–139 are important for interaction with CD80 and CD86; the sequence is MYPPPY. Residue Asn145 is glycosylated (N-linked (GlcNAc...) asparagine). The homodimerization stretch occupies residues 150-155; the sequence is YVIDPE. Residues 162-182 form a helical membrane-spanning segment; it reads FLLWILAAVSSGLFFYSFLIT. At 183 to 223 the chain is on the cytoplasmic side; it reads AVSLSKMLKKRSPLTTGVYVKMPPTGPECEKQFQPYFIPIN. Tyr201 is subject to Phosphotyrosine; by TXK and JAK2.

Homodimer; disulfide-linked. Binds to CD80/B7-1 and CD86/B7.2. Interacts with ICOSLG. N-glycosylation is important for dimerization. Post-translationally, phosphorylation at Tyr-201 prevents binding to the AP-2 adapter complex, blocks endocytosis, and leads to retention of CTLA4 on the cell surface.

It is found in the cell membrane. Its function is as follows. Inhibitory receptor acting as a major negative regulator of T-cell responses. The affinity of CTLA4 for its natural B7 family ligands, CD80 and CD86, is considerably stronger than the affinity of their cognate stimulatory coreceptor CD28. This is Cytotoxic T-lymphocyte protein 4 (CTLA4) from Canis lupus familiaris (Dog).